The chain runs to 690 residues: Protein AC23 (690 aa).

The N-terminal stretch at 1-37 is a signal peptide; the sequence is MLACKFSQYQAFIMDGVKLLGTCALIILLSTTSTVVG.

Its subcellular location is the virion. Functionally, pathogenicity factor that accelerates mortality in the host insect. The sequence is that of Protein AC23 from Autographa californica nuclear polyhedrosis virus (AcMNPV).